Here is a 283-residue protein sequence, read N- to C-terminus: Putative casein kinase II subunit beta-4 (283 aa).

Disordered regions lie at residues 1–23 and 35–92; these read MYKDRSGGGIMGGGGSSRSEILG and LDKH…SEGD. The segment covering 7–16 has biased composition (gly residues); sequence GGGIMGGGGS. The span at 58–70 shows a compositional bias: polar residues; the sequence is VPSTSTAKSQLHS.

This sequence belongs to the casein kinase 2 subunit beta family. Heterotetramer of two catalytic alpha subunits and two regulatory beta subunits. Phosphorylated by alpha subunit.

It localises to the cytoplasm. The protein localises to the cytosol. Its function is as follows. Plays a complex role in regulating the basal catalytic activity of the alpha subunit. The tetrameric holoenzyme CK2, composed of two alpha and two beta subunits, phosphorylates the transcription factor PIF1 after an exposure to light, resulting in a proteasome-dependent degradation of PIF1 and promotion of photomorphogenesis. CK2 phosphorylates translation initiation factors. May participate in the regulation of the initiation of translation. The chain is Putative casein kinase II subunit beta-4 from Arabidopsis thaliana (Mouse-ear cress).